We begin with the raw amino-acid sequence, 319 residues long: MADSVTVRQLVKATKLEVYSGEEYLDQRQVVLSDISRPGLELTGYFNYYPHERIQLFGRTEISFARNMSSEERLLILKRMATEDTPAFLVSRGLEAPAEMITAATAAHIPVLGSRLPTTRLSSLITEYLDSQLAERRSMHGVLVDIYGLGVLITGDSGVGKSETALELVQRGHRLIADDRVDVYQQDEQTIVGAAPPILSHLLEIRGLGIIDVMNLFGAGAVREDTTISLIVHLENWTPDKTFDRLGSGEQTQLIFDVPVPKITVPVKVGRNLAIIIEVAAMNFRAKSMGYDATKTFEKNLNHLIEHNEETDQNSSGDK.

Catalysis depends on residues His140 and Lys161. Residue 155–162 (GDSGVGKS) coordinates ATP. Residue Ser162 participates in Mg(2+) binding. Asp179 (proton acceptor; for phosphorylation activity. Proton donor; for dephosphorylation activity) is an active-site residue. The interval 203 to 212 (LEIRGLGIID) is important for the catalytic mechanism of both phosphorylation and dephosphorylation. Residue Glu204 participates in Mg(2+) binding. Arg245 is an active-site residue. The segment at 266-271 (PVKVGR) is important for the catalytic mechanism of dephosphorylation.

This sequence belongs to the HPrK/P family. As to quaternary structure, homohexamer, arranged as bilayered trimers. Six HPr molecules bind to the hexamer at sites that overlap two of its subunits. The cofactor is Mg(2+).

The enzyme catalyses [HPr protein]-L-serine + ATP = [HPr protein]-O-phospho-L-serine + ADP + H(+). The catalysed reaction is [HPr protein]-O-phospho-L-serine + phosphate + H(+) = [HPr protein]-L-serine + diphosphate. With respect to regulation, kinase activity is slightly activated by fructose 1,6-bisphosphate (FBP), and inhibited by inorganic phosphate (Pi), but FBP prevents kinase inhibition by Pi. Dephosphorylation of P-Ser-HPr is slightly inhibited by FBP. Its function is as follows. Catalyzes the ATP- as well as the pyrophosphate-dependent phosphorylation of 'Ser-46' in HPr, a phosphocarrier protein of the phosphoenolpyruvate-dependent sugar phosphotransferase system (PTS). HprK/P also catalyzes the pyrophosphate-producing, inorganic phosphate-dependent dephosphorylation (phosphorolysis) of seryl-phosphorylated HPr (P-Ser-HPr). The two antagonistic activities of HprK/P are regulated by several intracellular metabolites, which change their concentration in response to the absence or presence of rapidly metabolisable carbon sources (glucose, fructose, etc.) in the growth medium. Therefore, by controlling the phosphorylation state of HPr, HPrK/P is a sensor enzyme that plays a major role in the regulation of carbon metabolism and sugar transport: it mediates carbon catabolite repression (CCR), and regulates PTS-catalyzed carbohydrate uptake and inducer exclusion. This Lacticaseibacillus casei (Lactobacillus casei) protein is HPr kinase/phosphorylase (hprK).